A 395-amino-acid chain; its full sequence is Chorismate synthase (395 aa).

Arg40 and Arg46 together coordinate NADP(+). Residues 135 to 137 (RAS) and 256 to 257 (QA) each bind FMN. A compositionally biased stretch (basic and acidic residues) spans 272–283 (RRGSQAHDEMRP). The tract at residues 272 to 296 (RRGSQAHDEMRPGPDGILRSTNRAG) is disordered. FMN is bound by residues Gly300, 315–319 (KPIST), and Arg341.

This sequence belongs to the chorismate synthase family. In terms of assembly, homotetramer. FMNH2 serves as cofactor.

The enzyme catalyses 5-O-(1-carboxyvinyl)-3-phosphoshikimate = chorismate + phosphate. The protein operates within metabolic intermediate biosynthesis; chorismate biosynthesis; chorismate from D-erythrose 4-phosphate and phosphoenolpyruvate: step 7/7. Functionally, catalyzes the anti-1,4-elimination of the C-3 phosphate and the C-6 proR hydrogen from 5-enolpyruvylshikimate-3-phosphate (EPSP) to yield chorismate, which is the branch point compound that serves as the starting substrate for the three terminal pathways of aromatic amino acid biosynthesis. This reaction introduces a second double bond into the aromatic ring system. The chain is Chorismate synthase from Rhodococcus opacus (strain B4).